The following is a 333-amino-acid chain: Quinolinate synthase (333 aa).

Iminosuccinate-binding residues include histidine 41 and serine 58. Cysteine 103 lines the [4Fe-4S] cluster pocket. Iminosuccinate is bound by residues 129–131 and serine 146; that span reads YIN. A [4Fe-4S] cluster-binding site is contributed by cysteine 189. Residues 215 to 217 and threonine 232 each bind iminosuccinate; that span reads HPE. Cysteine 282 serves as a coordination point for [4Fe-4S] cluster.

This sequence belongs to the quinolinate synthase family. Type 2 subfamily. It depends on [4Fe-4S] cluster as a cofactor.

Its subcellular location is the cytoplasm. The catalysed reaction is iminosuccinate + dihydroxyacetone phosphate = quinolinate + phosphate + 2 H2O + H(+). It participates in cofactor biosynthesis; NAD(+) biosynthesis; quinolinate from iminoaspartate: step 1/1. In terms of biological role, catalyzes the condensation of iminoaspartate with dihydroxyacetone phosphate to form quinolinate. The polypeptide is Quinolinate synthase (Prochlorococcus marinus (strain MIT 9303)).